The primary structure comprises 180 residues: ATP-dependent protease subunit HslV (180 aa).

T5 is a catalytic residue. 3 residues coordinate Na(+): G161, C164, and T167.

The protein belongs to the peptidase T1B family. HslV subfamily. In terms of assembly, a double ring-shaped homohexamer of HslV is capped on each side by a ring-shaped HslU homohexamer. The assembly of the HslU/HslV complex is dependent on binding of ATP.

It localises to the cytoplasm. It catalyses the reaction ATP-dependent cleavage of peptide bonds with broad specificity.. With respect to regulation, allosterically activated by HslU binding. Protease subunit of a proteasome-like degradation complex believed to be a general protein degrading machinery. This chain is ATP-dependent protease subunit HslV, found in Campylobacter lari (strain RM2100 / D67 / ATCC BAA-1060).